Here is a 374-residue protein sequence, read N- to C-terminus: S-adenosylmethionine:tRNA ribosyltransferase-isomerase (374 aa).

It belongs to the QueA family. As to quaternary structure, monomer.

The protein localises to the cytoplasm. It catalyses the reaction 7-aminomethyl-7-carbaguanosine(34) in tRNA + S-adenosyl-L-methionine = epoxyqueuosine(34) in tRNA + adenine + L-methionine + 2 H(+). The protein operates within tRNA modification; tRNA-queuosine biosynthesis. Functionally, transfers and isomerizes the ribose moiety from AdoMet to the 7-aminomethyl group of 7-deazaguanine (preQ1-tRNA) to give epoxyqueuosine (oQ-tRNA). The chain is S-adenosylmethionine:tRNA ribosyltransferase-isomerase from Prochlorococcus marinus (strain MIT 9215).